The chain runs to 417 residues: MRDDQIFNLIEKEKLREKEHIKLIASENFTSLEIRQAVGSILTNKYAEGYPLNRYYGGCSFVDEIESLAILRAKELFGAKYANVQPHSGSQANMAAIMALINPGDRILGMQLSHGGHLTHGSRVNFSGIFFNTYFYGVSRDSELIDYDEVLKIARDCRPNLIIAGASSYSREIDFKKFREIADDVSAYLLCDIAHIAGLIVAGFHNSSIDVAHLTTSTTHKTLRGPRGGIILSGKDFDKLVTFNGKEKALFNAVNSTVFPGTQGGPLVHVIAGKAIAFREALQESFREYIANVIKNTKVMAEYFKSEGFRIVSGGTDNHLFLVDLSNLDLTGADAEKLLEGVNITLNKNAIPFDKKSPSLASGIRIGGAAITSRGLNENDSLNVAKFIVRALKTRSDIELKQIKKEVVRFIRDFDMP.

Residues L112 and 116 to 118 (GHL) each bind (6S)-5,6,7,8-tetrahydrofolate. K221 is modified (N6-(pyridoxal phosphate)lysine). E247 serves as a coordination point for (6S)-5,6,7,8-tetrahydrofolate.

The protein belongs to the SHMT family. As to quaternary structure, homodimer. It depends on pyridoxal 5'-phosphate as a cofactor.

The protein localises to the cytoplasm. The enzyme catalyses (6R)-5,10-methylene-5,6,7,8-tetrahydrofolate + glycine + H2O = (6S)-5,6,7,8-tetrahydrofolate + L-serine. Its pathway is one-carbon metabolism; tetrahydrofolate interconversion. It functions in the pathway amino-acid biosynthesis; glycine biosynthesis; glycine from L-serine: step 1/1. In terms of biological role, catalyzes the reversible interconversion of serine and glycine with tetrahydrofolate (THF) serving as the one-carbon carrier. This reaction serves as the major source of one-carbon groups required for the biosynthesis of purines, thymidylate, methionine, and other important biomolecules. Also exhibits THF-independent aldolase activity toward beta-hydroxyamino acids, producing glycine and aldehydes, via a retro-aldol mechanism. The sequence is that of Serine hydroxymethyltransferase from Borrelia garinii subsp. bavariensis (strain ATCC BAA-2496 / DSM 23469 / PBi) (Borreliella bavariensis).